A 171-amino-acid chain; its full sequence is N5-carboxyaminoimidazole ribonucleotide mutase (171 aa).

Ser-13, Asp-16, and Arg-43 together coordinate substrate.

The protein belongs to the AIR carboxylase family. Class I subfamily.

The catalysed reaction is 5-carboxyamino-1-(5-phospho-D-ribosyl)imidazole + H(+) = 5-amino-1-(5-phospho-D-ribosyl)imidazole-4-carboxylate. It functions in the pathway purine metabolism; IMP biosynthesis via de novo pathway; 5-amino-1-(5-phospho-D-ribosyl)imidazole-4-carboxylate from 5-amino-1-(5-phospho-D-ribosyl)imidazole (N5-CAIR route): step 2/2. Functionally, catalyzes the conversion of N5-carboxyaminoimidazole ribonucleotide (N5-CAIR) to 4-carboxy-5-aminoimidazole ribonucleotide (CAIR). In Mycobacterium leprae (strain TN), this protein is N5-carboxyaminoimidazole ribonucleotide mutase.